Consider the following 833-residue polypeptide: Leucine--tRNA ligase (833 aa).

A 'HIGH' region motif is present at residues 41–52; it reads PYPSGAGLHVGH. The 'KMSKS' region signature appears at 610 to 614; the sequence is KMSKS. K613 contacts ATP.

Belongs to the class-I aminoacyl-tRNA synthetase family.

The protein localises to the cytoplasm. It catalyses the reaction tRNA(Leu) + L-leucine + ATP = L-leucyl-tRNA(Leu) + AMP + diphosphate. The protein is Leucine--tRNA ligase of Streptococcus pyogenes serotype M49 (strain NZ131).